A 151-amino-acid chain; its full sequence is Ribosome-binding factor A (151 aa).

Positions 116–151 are disordered; the sequence is DAEVARAAANARPAGDPDPYREPRPADDDDEDDEDE. The span at 120–129 shows a compositional bias: low complexity; that stretch reads ARAAANARPA. Acidic residues predominate over residues 142–151; sequence DDDDEDDEDE.

It belongs to the RbfA family. As to quaternary structure, monomer. Binds 30S ribosomal subunits, but not 50S ribosomal subunits or 70S ribosomes.

The protein resides in the cytoplasm. One of several proteins that assist in the late maturation steps of the functional core of the 30S ribosomal subunit. Associates with free 30S ribosomal subunits (but not with 30S subunits that are part of 70S ribosomes or polysomes). Required for efficient processing of 16S rRNA. May interact with the 5'-terminal helix region of 16S rRNA. The chain is Ribosome-binding factor A from Thermobifida fusca (strain YX).